The primary structure comprises 60 residues: Large ribosomal subunit protein uL30 (60 aa).

Belongs to the universal ribosomal protein uL30 family. Part of the 50S ribosomal subunit.

This chain is Large ribosomal subunit protein uL30, found in Dehalococcoides mccartyi (strain ATCC BAA-2266 / KCTC 15142 / 195) (Dehalococcoides ethenogenes (strain 195)).